Here is a 163-residue protein sequence, read N- to C-terminus: Nucleotide-binding protein YajQ (163 aa).

It belongs to the YajQ family.

In terms of biological role, nucleotide-binding protein. The polypeptide is Nucleotide-binding protein YajQ (Salmonella typhi).